The following is a 105-amino-acid chain: Pyrimidine/purine nucleoside phosphorylase (105 aa).

Belongs to the nucleoside phosphorylase PpnP family.

It carries out the reaction a purine D-ribonucleoside + phosphate = a purine nucleobase + alpha-D-ribose 1-phosphate. It catalyses the reaction adenosine + phosphate = alpha-D-ribose 1-phosphate + adenine. The enzyme catalyses cytidine + phosphate = cytosine + alpha-D-ribose 1-phosphate. The catalysed reaction is guanosine + phosphate = alpha-D-ribose 1-phosphate + guanine. It carries out the reaction inosine + phosphate = alpha-D-ribose 1-phosphate + hypoxanthine. It catalyses the reaction thymidine + phosphate = 2-deoxy-alpha-D-ribose 1-phosphate + thymine. The enzyme catalyses uridine + phosphate = alpha-D-ribose 1-phosphate + uracil. The catalysed reaction is xanthosine + phosphate = alpha-D-ribose 1-phosphate + xanthine. In terms of biological role, catalyzes the phosphorolysis of diverse nucleosides, yielding D-ribose 1-phosphate and the respective free bases. Can use uridine, adenosine, guanosine, cytidine, thymidine, inosine and xanthosine as substrates. Also catalyzes the reverse reactions. This chain is Pyrimidine/purine nucleoside phosphorylase, found in Acidovorax ebreus (strain TPSY) (Diaphorobacter sp. (strain TPSY)).